Reading from the N-terminus, the 137-residue chain is ATP synthase epsilon chain (137 aa).

It belongs to the ATPase epsilon chain family. As to quaternary structure, F-type ATPases have 2 components, CF(1) - the catalytic core - and CF(0) - the membrane proton channel. CF(1) has five subunits: alpha(3), beta(3), gamma(1), delta(1), epsilon(1). CF(0) has three main subunits: a, b and c.

The protein resides in the cell membrane. In terms of biological role, produces ATP from ADP in the presence of a proton gradient across the membrane. The protein is ATP synthase epsilon chain of Caldicellulosiruptor bescii (strain ATCC BAA-1888 / DSM 6725 / KCTC 15123 / Z-1320) (Anaerocellum thermophilum).